The following is a 216-amino-acid chain: MVLRSQIPAHELALPDPARALPGRAEAMPVPAAHYVNGHPLKPPFPAGMRQALFGLGCFWGAERRFWQQPGVWTTAVGYAGGLTPNPTYEEVCSGLTGHTEVVLVVFDPQETDYRTLLKVFWEIHDPTQGMRQGNDIGTQYRSAIYCFDASQRASAEASRERFQAELAKAGYGPVTTEIADAPPFYYAEDYHQQYLAKNPGGYCGLGGTGVCLPPA.

Residue C58 is part of the active site.

It belongs to the MsrA Met sulfoxide reductase family.

The catalysed reaction is L-methionyl-[protein] + [thioredoxin]-disulfide + H2O = L-methionyl-(S)-S-oxide-[protein] + [thioredoxin]-dithiol. It carries out the reaction [thioredoxin]-disulfide + L-methionine + H2O = L-methionine (S)-S-oxide + [thioredoxin]-dithiol. Functionally, has an important function as a repair enzyme for proteins that have been inactivated by oxidation. Catalyzes the reversible oxidation-reduction of methionine sulfoxide in proteins to methionine. This Azotobacter vinelandii (strain DJ / ATCC BAA-1303) protein is Peptide methionine sulfoxide reductase MsrA.